We begin with the raw amino-acid sequence, 598 residues long: 2-succinyl-5-enolpyruvyl-6-hydroxy-3-cyclohexene-1-carboxylate synthase (598 aa).

This sequence belongs to the TPP enzyme family. MenD subfamily. Homodimer. Requires Mg(2+) as cofactor. It depends on Mn(2+) as a cofactor. Thiamine diphosphate is required as a cofactor.

The enzyme catalyses isochorismate + 2-oxoglutarate + H(+) = 5-enolpyruvoyl-6-hydroxy-2-succinyl-cyclohex-3-ene-1-carboxylate + CO2. The protein operates within quinol/quinone metabolism; 1,4-dihydroxy-2-naphthoate biosynthesis; 1,4-dihydroxy-2-naphthoate from chorismate: step 2/7. It participates in cofactor biosynthesis; phylloquinone biosynthesis. In terms of biological role, catalyzes the thiamine diphosphate-dependent decarboxylation of 2-oxoglutarate and the subsequent addition of the resulting succinic semialdehyde-thiamine pyrophosphate anion to isochorismate to yield 2-succinyl-5-enolpyruvyl-6-hydroxy-3-cyclohexene-1-carboxylate (SEPHCHC). This chain is 2-succinyl-5-enolpyruvyl-6-hydroxy-3-cyclohexene-1-carboxylate synthase, found in Prochlorococcus marinus (strain NATL2A).